Consider the following 209-residue polypeptide: NADH-ubiquinone oxidoreductase subunit 9 (209 aa).

This sequence belongs to the complex I 30 kDa subunit family. As to quaternary structure, complex I is composed of about 45 different subunits.

It localises to the mitochondrion inner membrane. The catalysed reaction is a ubiquinone + NADH + 5 H(+)(in) = a ubiquinol + NAD(+) + 4 H(+)(out). In terms of biological role, core subunit of the mitochondrial membrane respiratory chain NADH dehydrogenase (Complex I) that is believed to belong to the minimal assembly required for catalysis. Complex I functions in the transfer of electrons from NADH to the respiratory chain. The immediate electron acceptor for the enzyme is believed to be ubiquinone. In Dictyostelium discoideum (Social amoeba), this protein is NADH-ubiquinone oxidoreductase subunit 9 (nad9).